The chain runs to 355 residues: Phosphoserine aminotransferase (355 aa).

Residue arginine 41 coordinates L-glutamate. Pyridoxal 5'-phosphate is bound by residues 75-76, tryptophan 99, threonine 147, aspartate 166, and glutamine 189; that span reads AS. Lysine 190 carries the post-translational modification N6-(pyridoxal phosphate)lysine. 231-232 serves as a coordination point for pyridoxal 5'-phosphate; sequence NT.

Belongs to the class-V pyridoxal-phosphate-dependent aminotransferase family. SerC subfamily. In terms of assembly, homodimer. Pyridoxal 5'-phosphate serves as cofactor.

It is found in the cytoplasm. It carries out the reaction O-phospho-L-serine + 2-oxoglutarate = 3-phosphooxypyruvate + L-glutamate. It catalyses the reaction 4-(phosphooxy)-L-threonine + 2-oxoglutarate = (R)-3-hydroxy-2-oxo-4-phosphooxybutanoate + L-glutamate. It functions in the pathway amino-acid biosynthesis; L-serine biosynthesis; L-serine from 3-phospho-D-glycerate: step 2/3. The protein operates within cofactor biosynthesis; pyridoxine 5'-phosphate biosynthesis; pyridoxine 5'-phosphate from D-erythrose 4-phosphate: step 3/5. Functionally, catalyzes the reversible conversion of 3-phosphohydroxypyruvate to phosphoserine and of 3-hydroxy-2-oxo-4-phosphonooxybutanoate to phosphohydroxythreonine. This is Phosphoserine aminotransferase from Parabacteroides distasonis (strain ATCC 8503 / DSM 20701 / CIP 104284 / JCM 5825 / NCTC 11152).